A 64-amino-acid polypeptide reads, in one-letter code: Translational regulator CsrA (64 aa).

It belongs to the CsrA/RsmA family. Homodimer; the beta-strands of each monomer intercalate to form a hydrophobic core, while the alpha-helices form wings that extend away from the core.

It is found in the cytoplasm. Functionally, a key translational regulator that binds mRNA to regulate translation initiation and/or mRNA stability. Mediates global changes in gene expression, shifting from rapid growth to stress survival by linking envelope stress, the stringent response and the catabolite repression systems. Usually binds in the 5'-UTR; binding at or near the Shine-Dalgarno sequence prevents ribosome-binding, repressing translation, binding elsewhere in the 5'-UTR can activate translation and/or stabilize the mRNA. Its function is antagonized by small RNA(s). This chain is Translational regulator CsrA, found in Dichelobacter nodosus (strain VCS1703A).